Reading from the N-terminus, the 192-residue chain is E3 ubiquitin-protein ligase RNF185 (192 aa).

The span at 1–27 (MASKGPSASASPENSSAGGPSGSSNGA) shows a compositional bias: low complexity. Residues 1-30 (MASKGPSASASPENSSAGGPSGSSNGAGES) form a disordered region. Residues 1 to 130 (MASKGPSASA…GGFQGFGFGD (130 aa)) are Cytoplasmic-facing. A required for ubiquitin ligase activity and protection against ER stress-induced cell death region spans residues 29–80 (ESGGQDSTFECNICLDTAKDAVISLCGHLFCWPCLHQWLETRPNRQVCPVCK). The segment at 39–80 (CNICLDTAKDAVISLCGHLFCWPCLHQWLETRPNRQVCPVCK) adopts an RING-type zinc-finger fold. The tract at residues 90 to 123 (PLYGRGSTGQQDPREKTPPRPQGQRPEPENRGGF) is disordered. A helical transmembrane segment spans residues 131–151 (GGFQMSFGIGAFPFGIFATAF). Residues 152-171 (NINDGRPPPAVPGTPQYVDE) are Mitochondrial intermembrane-facing. Residues 172–192 (QFLSRLFLFVALVIMFWLLIA) traverse the membrane as a helical segment.

As to quaternary structure, interacts with ATG5 and BNIP1. Ubiquitously expressed.

The protein localises to the mitochondrion outer membrane. It localises to the endoplasmic reticulum membrane. The catalysed reaction is S-ubiquitinyl-[E2 ubiquitin-conjugating enzyme]-L-cysteine + [acceptor protein]-L-lysine = [E2 ubiquitin-conjugating enzyme]-L-cysteine + N(6)-ubiquitinyl-[acceptor protein]-L-lysine.. Its pathway is protein modification; protein ubiquitination. E3 ubiquitin-protein ligase that regulates selective mitochondrial autophagy by mediating 'Lys-63'-linked polyubiquitination of BNIP1. Acts in the endoplasmic reticulum (ER)-associated degradation (ERAD) pathway, which targets misfolded proteins that accumulate in the endoplasmic reticulum (ER) for ubiquitination and subsequent proteasome-mediated degradation. Protects cells from ER stress-induced apoptosis. Responsible for the cotranslational ubiquitination and degradation of CFTR in the ERAD pathway. Also acts as a regulator of the innate antiviral response by catalyzing 'Lys-27'-linked polyubiquitination of CGAS at 'Lys-173' and 'Lys-384', thereby promoting CGAS cyclic GMP-AMP synthase activity. Preferentially associates with the E2 enzymes UBE2J1 and UBE2J2. The protein is E3 ubiquitin-protein ligase RNF185 of Homo sapiens (Human).